The primary structure comprises 518 residues: Probable cytochrome P450 317a1 (518 aa).

Cysteine 461 lines the heme pocket.

It belongs to the cytochrome P450 family. Heme serves as cofactor.

It localises to the endoplasmic reticulum membrane. The protein localises to the microsome membrane. In terms of biological role, may be involved in the metabolism of insect hormones and in the breakdown of synthetic insecticides. The chain is Probable cytochrome P450 317a1 (Cyp317a1) from Drosophila melanogaster (Fruit fly).